We begin with the raw amino-acid sequence, 161 residues long: Transcription elongation factor GreA (161 aa).

Positions 8–28 (LTQEGFKQLEKELENLIQVKR) form a coiled coil.

This sequence belongs to the GreA/GreB family.

Functionally, necessary for efficient RNA polymerase transcription elongation past template-encoded arresting sites. The arresting sites in DNA have the property of trapping a certain fraction of elongating RNA polymerases that pass through, resulting in locked ternary complexes. Cleavage of the nascent transcript by cleavage factors such as GreA or GreB allows the resumption of elongation from the new 3'terminus. GreA releases sequences of 2 to 3 nucleotides. In Mycoplasma genitalium (strain ATCC 33530 / DSM 19775 / NCTC 10195 / G37) (Mycoplasmoides genitalium), this protein is Transcription elongation factor GreA.